A 119-amino-acid chain; its full sequence is Methylglyoxal synthase (119 aa).

Residues 1-119 (MRIALIAHDK…GTADLIIKQF (119 aa)) form the MGS-like domain. Substrate contacts are provided by residues H8, K12, 34 to 37 (TGTT), and 54 to 55 (SG). D60 functions as the Proton donor/acceptor in the catalytic mechanism. H87 is a binding site for substrate.

This sequence belongs to the methylglyoxal synthase family.

The enzyme catalyses dihydroxyacetone phosphate = methylglyoxal + phosphate. Functionally, catalyzes the formation of methylglyoxal from dihydroxyacetone phosphate. This Clostridium botulinum (strain Eklund 17B / Type B) protein is Methylglyoxal synthase.